Here is a 220-residue protein sequence, read N- to C-terminus: Fructose-6-phosphate aldolase (220 aa).

Lys-85 functions as the Schiff-base intermediate with substrate in the catalytic mechanism.

This sequence belongs to the transaldolase family. Type 3A subfamily. In terms of assembly, homodecamer.

It localises to the cytoplasm. It carries out the reaction beta-D-fructose 6-phosphate = dihydroxyacetone + D-glyceraldehyde 3-phosphate. Its function is as follows. Catalyzes the reversible formation of fructose 6-phosphate from dihydroxyacetone and D-glyceraldehyde 3-phosphate via an aldolization reaction. The protein is Fructose-6-phosphate aldolase of Salmonella gallinarum (strain 287/91 / NCTC 13346).